We begin with the raw amino-acid sequence, 78 residues long: Antitoxin VapB27 (78 aa).

Positions Met1 to Arg45 constitute a SpoVT-AbrB domain.

Belongs to the VapB family. Interacts with cognate toxin VapC27 and non-cognate toxins MazF6 and VapC40. Interaction with MazF6 and MazF9 partially neutralizes the toxins.

Functionally, antitoxin component of a type II toxin-antitoxin (TA) system. Cognate toxin is VapC27. Upon expression in E.coli partially counteracts the ribonuclease activity of non-cognate toxins MazF6 and MazF9. The sequence is that of Antitoxin VapB27 (vapB27) from Mycobacterium tuberculosis (strain ATCC 25618 / H37Rv).